Reading from the N-terminus, the 126-residue chain is Fluoride-specific ion channel FluC 2 (126 aa).

The next 4 helical transmembrane spans lie at 11 to 31 (VLLI…ICEH), 36 to 56 (LGIL…MYDA), 69 to 89 (AFGT…VQSF), and 93 to 113 (FLPA…GVFF). 2 residues coordinate Na(+): Gly76 and Thr79.

The protein belongs to the fluoride channel Fluc/FEX (TC 1.A.43) family.

It localises to the cell membrane. It catalyses the reaction fluoride(in) = fluoride(out). Its activity is regulated as follows. Na(+) is not transported, but it plays an essential structural role and its presence is essential for fluoride channel function. Fluoride-specific ion channel. Important for reducing fluoride concentration in the cell, thus reducing its toxicity. This Methanosarcina mazei (strain ATCC BAA-159 / DSM 3647 / Goe1 / Go1 / JCM 11833 / OCM 88) (Methanosarcina frisia) protein is Fluoride-specific ion channel FluC 2.